The sequence spans 1183 residues: Probable RNA-dependent RNA polymerase 4 (1183 aa).

The protein belongs to the RdRP family. Expressed in shoot apical meristem (SAM) and panicles.

It catalyses the reaction RNA(n) + a ribonucleoside 5'-triphosphate = RNA(n+1) + diphosphate. In terms of biological role, probably involved in the RNA silencing pathway and required for the generation of small interfering RNAs (siRNAs). The chain is Probable RNA-dependent RNA polymerase 4 (RDR4) from Oryza sativa subsp. japonica (Rice).